A 261-amino-acid chain; its full sequence is Phosphate import ATP-binding protein PstB 1 (261 aa).

The region spanning 8-256 is the ABC transporter domain; that stretch reads IKVNNLSFYY…PHDSRTREYV (249 aa). Residue 40–47 participates in ATP binding; it reads GPSGCGKS.

This sequence belongs to the ABC transporter superfamily. Phosphate importer (TC 3.A.1.7) family. The complex is composed of two ATP-binding proteins (PstB), two transmembrane proteins (PstC and PstA) and a solute-binding protein (PstS).

It localises to the cell inner membrane. The catalysed reaction is phosphate(out) + ATP + H2O = ADP + 2 phosphate(in) + H(+). In terms of biological role, part of the ABC transporter complex PstSACB involved in phosphate import. Responsible for energy coupling to the transport system. The polypeptide is Phosphate import ATP-binding protein PstB 1 (Nostoc sp. (strain PCC 7120 / SAG 25.82 / UTEX 2576)).